We begin with the raw amino-acid sequence, 168 residues long: uncharacterized protein (168 aa).

The segment covering 1–15 has biased composition (basic and acidic residues); sequence MKEASDREEAPKMVE. A disordered region spans residues 1 to 36; that stretch reads MKEASDREEAPKMVEKNYSTGFRKAHGEKDQSVTKP.

The protein resides in the cytoplasm. This is an uncharacterized protein from Saccharomyces cerevisiae (strain ATCC 204508 / S288c) (Baker's yeast).